A 299-amino-acid polypeptide reads, in one-letter code: 33 kDa chaperonin (299 aa).

2 disulfides stabilise this stretch: C240–C242 and C273–C276.

The protein belongs to the HSP33 family. In terms of processing, under oxidizing conditions two disulfide bonds are formed involving the reactive cysteines. Under reducing conditions zinc is bound to the reactive cysteines and the protein is inactive.

It localises to the cytoplasm. Functionally, redox regulated molecular chaperone. Protects both thermally unfolding and oxidatively damaged proteins from irreversible aggregation. Plays an important role in the bacterial defense system toward oxidative stress. The polypeptide is 33 kDa chaperonin (Gloeothece citriformis (strain PCC 7424) (Cyanothece sp. (strain PCC 7424))).